A 409-amino-acid chain; its full sequence is MALVNENYLKLPGSYLFSEIARRVNQFKKANPEADIIRLGIGDVTRPLVPAVVEAMKKAVDEMGRAETFRGYGPEQGYDFLIGQIIENDYKPRGIDLGMDEVFVSDGSKCDTANFQEILGIGNIVAVTDPVYPVYVDSNVMAGRSGAFNEKGQFDDIVYLPCTEANGMKPELPKTRVDMIYLCFPNNPTGMTLTKEELKQWVDYARENKSIILYDAAYEAFIQEAHIPRSIYEIEGAREVAVEFRSFSKTAGFTGTRCAFTVVPKEVMAYDREGRAYSLNGLWLRRQTTKFNGVSYPVQAAAAAIYTEAGKKQVKETIEYYMENARIIREGLVEAGYKVFGGVNAPYIWLKTPDNMSSWDFFDKLISVANVVGTPGAGFGASGEGYFRLTAFGTRENTVKALERIRTRM.

Substrate-binding residues include Y15 and G42. Residues Y72, 108–109 (SK), Y132, N187, Y218, and 246–248 (SFS) each bind pyridoxal 5'-phosphate. Residues K109, Y132, and N187 each contribute to the substrate site. K249 is modified (N6-(pyridoxal phosphate)lysine). Pyridoxal 5'-phosphate contacts are provided by R257 and N292. Substrate is bound by residues N292 and R388.

It belongs to the class-I pyridoxal-phosphate-dependent aminotransferase family. LL-diaminopimelate aminotransferase subfamily. In terms of assembly, homodimer. The cofactor is pyridoxal 5'-phosphate.

The enzyme catalyses (2S,6S)-2,6-diaminopimelate + 2-oxoglutarate = (S)-2,3,4,5-tetrahydrodipicolinate + L-glutamate + H2O + H(+). It participates in amino-acid biosynthesis; L-lysine biosynthesis via DAP pathway; LL-2,6-diaminopimelate from (S)-tetrahydrodipicolinate (aminotransferase route): step 1/1. Its function is as follows. Involved in the synthesis of meso-diaminopimelate (m-DAP or DL-DAP), required for both lysine and peptidoglycan biosynthesis. Catalyzes the direct conversion of tetrahydrodipicolinate to LL-diaminopimelate. The chain is LL-diaminopimelate aminotransferase from Heliobacterium modesticaldum (strain ATCC 51547 / Ice1).